We begin with the raw amino-acid sequence, 195 residues long: U8 snoRNA-decapping enzyme (195 aa).

The Nudix hydrolase domain maps to 18 to 168 (GWRHACHAML…LENTFIGNAR (151 aa)). 3 residues coordinate substrate: His24, Arg50, and Phe57. The Mn(2+) site is built by Gly59, Glu76, Glu80, and His99. The short motif at 61–82 (FVDLRDGSLEDGLNRELGEELG) is the Nudix box element. Residues Asn166 and Gln170 each coordinate substrate. Glu173 is a Mn(2+) binding site.

The protein belongs to the Nudix hydrolase family. NUDT16 subfamily. As to quaternary structure, homodimer. Requires Mg(2+) as cofactor. It depends on Mn(2+) as a cofactor. The cofactor is Co(2+).

Its subcellular location is the nucleus. The protein localises to the nucleolus. The protein resides in the nucleoplasm. It is found in the cytoplasm. It catalyses the reaction a 5'-end (N(7)-methyl 5'-triphosphoguanosine)-ribonucleoside in mRNA + H2O = N(7)-methyl-GDP + a 5'-end phospho-ribonucleoside in mRNA + 2 H(+). The enzyme catalyses IDP + H2O = IMP + phosphate + H(+). The catalysed reaction is dIDP + H2O = dIMP + phosphate + H(+). It carries out the reaction a 5'-end NAD(+)-phospho-ribonucleoside in mRNA + H2O = a 5'-end phospho-ribonucleoside in mRNA + NAD(+) + H(+). It catalyses the reaction a 5'-end FAD-phospho-ribonucleoside in mRNA + H2O = a 5'-end phospho-adenosine-phospho-ribonucleoside in mRNA + FMN + 2 H(+). The enzyme catalyses a 5'-end CoA-ribonucleoside in mRNA + H2O = a 5'-end phospho-adenosine-phospho-ribonucleoside in mRNA + (R)-4'-phosphopantetheine + 2 H(+). Functionally, RNA-binding and decapping enzyme that catalyzes the cleavage of the cap structure of snoRNAs and mRNAs in a metal-dependent manner. Part of the U8 snoRNP complex that is required for the accumulation of mature 5.8S and 28S rRNA. Has diphosphatase activity and removes m7G and/or m227G caps from U8 snoRNA and leaves a 5'monophosphate on the RNA. Also catalyzes the cleavage of the cap structure on mRNAs. Does not hydrolyze cap analog structures like 7-methylguanosine nucleoside triphosphate (m7GpppG). Also hydrolysis m7G- and m227G U3-capped RNAs but with less efficiencies. Has broad substrate specificity with manganese or cobalt as cofactor and can act on various RNA species. Binds to the U8 snoRNA; metal is not required for RNA-binding. May play a role in the regulation of snoRNAs and mRNAs degradation. Also acts as a phosphatase; hydrolyzes the non-canonical purine nucleotides inosine diphosphate (IDP) and deoxyinosine diphosphate (dITP) as well as guanosine diphosphate (GDP), deoxyguanosine diphosphate (dGDP), xanthine diphosphate (XDP), inosine triphosphate (ITP) and deoxyinosine triphosphate (ITP) to their respective monophosphate derivatives and does not distinguish between the deoxy- and ribose forms. The order of activity with different substrates is IDP &gt; dIDP &gt;&gt; GDP = dGDP &gt; XDP = ITP = dITP. Binds strongly to GTP, ITP and XTP. Participates in the hydrolysis of dIDP/IDP and probably excludes non-canonical purines from RNA and DNA precursor pools, thus preventing their incorporation into RNA and DNA and avoiding chromosomal lesions. Exhibits decapping activity towards NAD-capped RNAs and FAD-capped RNAs. Exhibits decapping activity towards dpCoA-capped RNAs in vitro. The polypeptide is U8 snoRNA-decapping enzyme (NUDT16) (Ovis aries (Sheep)).